Here is a 504-residue protein sequence, read N- to C-terminus: Glycerol kinase (504 aa).

Threonine 14 lines the ADP pocket. 3 residues coordinate ATP: threonine 14, threonine 15, and serine 16. Residue threonine 14 participates in sn-glycerol 3-phosphate binding. ADP is bound at residue arginine 18. Arginine 84, glutamate 85, tyrosine 136, and aspartate 246 together coordinate sn-glycerol 3-phosphate. Glycerol-binding residues include arginine 84, glutamate 85, tyrosine 136, aspartate 246, and glutamine 247. Residues threonine 268 and glycine 311 each coordinate ADP. Threonine 268, glycine 311, glutamine 315, and glycine 412 together coordinate ATP. The ADP site is built by glycine 412 and asparagine 416.

The protein belongs to the FGGY kinase family.

It catalyses the reaction glycerol + ATP = sn-glycerol 3-phosphate + ADP + H(+). The protein operates within polyol metabolism; glycerol degradation via glycerol kinase pathway; sn-glycerol 3-phosphate from glycerol: step 1/1. With respect to regulation, inhibited by fructose 1,6-bisphosphate (FBP). Its function is as follows. Key enzyme in the regulation of glycerol uptake and metabolism. Catalyzes the phosphorylation of glycerol to yield sn-glycerol 3-phosphate. This chain is Glycerol kinase, found in Aliivibrio fischeri (strain ATCC 700601 / ES114) (Vibrio fischeri).